A 426-amino-acid polypeptide reads, in one-letter code: Phosphomethylpyrimidine synthase (426 aa).

Substrate is bound by residues Met94, Tyr123, His162, 184–186 (SRG), 225–228 (NGMR), and Glu264. His268 contacts Zn(2+). Tyr291 contacts substrate. His332 is a Zn(2+) binding site. Positions 406, 409, and 413 each coordinate [4Fe-4S] cluster.

It belongs to the ThiC family. [4Fe-4S] cluster is required as a cofactor.

The catalysed reaction is 5-amino-1-(5-phospho-beta-D-ribosyl)imidazole + S-adenosyl-L-methionine = 4-amino-2-methyl-5-(phosphooxymethyl)pyrimidine + CO + 5'-deoxyadenosine + formate + L-methionine + 3 H(+). The protein operates within cofactor biosynthesis; thiamine diphosphate biosynthesis. Its function is as follows. Catalyzes the synthesis of the hydroxymethylpyrimidine phosphate (HMP-P) moiety of thiamine from aminoimidazole ribotide (AIR) in a radical S-adenosyl-L-methionine (SAM)-dependent reaction. This chain is Phosphomethylpyrimidine synthase, found in Methanospirillum hungatei JF-1 (strain ATCC 27890 / DSM 864 / NBRC 100397 / JF-1).